The following is a 94-amino-acid chain: MMASTSNDEEKLISTTDKYFIEQRNIVLQEINETMNSILNGLNGLNISLESSIAVGREFQSVSDLWKTLYDGLESLSDEAPIDEQPTLSQSKTK.

Phosphoserine is present on Ser91.

The protein belongs to the DASH complex DAD1 family. Component of the DASH complex consisting of ASK1, DAD1, DAD2, DAD3, DAD4, DAM1, DUO1, HSK3, SPC19 and SPC34, with a stoichiometry of one copy of each subunit per complex. Multiple DASH complexes oligomerize to form a ring that encircles spindle microtubules and organizes the rod-like NDC80 complexes of the outer kinetochore. DASH complex oligomerization strengthens microtubule attachments. On cytoplasmic microtubules, DASH complexes appear to form patches instead of rings.

The protein resides in the nucleus. It is found in the cytoplasm. It localises to the cytoskeleton. Its subcellular location is the spindle. The protein localises to the chromosome. The protein resides in the centromere. It is found in the kinetochore. Component of the DASH complex that connects microtubules with kinetochores and couples microtubule depolymerisation to chromosome movement; it is involved in retrieving kinetochores to the spindle poles before their re-orientation on the spindle in early mitosis and allows microtubule depolymerization to pull chromosomes apart and resist detachment during anaphase. Kinetochores, consisting of a centromere-associated inner segment and a microtubule-contacting outer segment, play a crucial role in chromosome segregation by mediating the physical connection between centromeric DNA and microtubules. Kinetochores also serve as an input point for the spindle assembly checkpoint, which delays anaphase until all chromosomes have bioriented on the mitotic spindle. During spindle-kinetochore attachment, kinetochores first attach to the lateral surface of spindle microtubules, which supports the congression of chromosomes toward the middle of the dividing cell; they then slide along towards the spindle pole, a process independent of the DASH complex but requiring the NDC80 complex. When the end of a disassembling microtubule reaches the laterally attached kinetochore, the DASH complex together with the NDC80 complex and STU2 convert lateral attachment to end-on capture to produce a structure that can track with microtubule shortening and sustain attachment when tension is applied across sister kinetochores upon their biorientation. Microtubule depolymerization proceeds by protofilament splaying and induces the kinetochore-attached DASH complex to slide longitudinally, thereby helping to transduce depolymerization energy into pulling forces to disjoin chromatids. Incorrect microtubule attachments are corrected by releasing microubules from the kinetochore through phosphorylation by IPL1 of kinetochore components. Links the microtubule cytoskeleton to chromosomes during interphase. Also contributes to the poleward transport of kinetochores on microtubules following centromeric DNA replication in S-phase. The sequence is that of DASH complex subunit DAD1 (DAD1) from Saccharomyces cerevisiae (strain ATCC 204508 / S288c) (Baker's yeast).